Reading from the N-terminus, the 805-residue chain is MLVLMLAAAVATMVRAHTLCRVHTVRTGKVFKSNIQLQGDPLFYAFPNTFVLKNVCKADISVYLGQKVFLTIDNFESSLLPLTVPKSLAVGVPSITSAHFVSGSLVLFVISGKGYSYDYYENTWRKLEGISEPVSHISGDVCCFKGSFCLELSNNLFAYLRGGQIPGTNIYFSDNGGFSFQLMNTDKLSHLTGTLGGIFHLHSMSQVGVLMVENNLGTFHYMEYPLNHSMGIAFSYKNLLEVIMKPYQRGFMVLWNQKSILVSSNSGQIVEHVRLIDQKIFTDLDVEHANINIYSVASNAYELAFLVAEDHLYYGSQSYMGTYVIKLPHQPLWSTHTSIYFEDIGILQVLTPVADPHFAAYDFDKCTVNVQSSLMDEKLALQPCNVELLESTMINTMFTIDMNSKLKLSALMIPRKGENPTPLVMVSNPHALGFKANLNEFGNTFDGNSKYKLDIELKQQHHWGNSDFNFTASIKRHAISSVTVDIADKTLSCVDLKPLSTLISVGCDMTKKIVVQNKISACTMGILNPVQLQKNYTYTIEKEAYDPINHNGEAQDDLIVFYEYKDLGCPRLVYYDKPWKPVVELWKNGIVEEIMNAEYVISEINGLVTYSYSLTAATANCRSQPQNWSTFESDIENEEPFLWNRENYVSCHEDNKDNPLLWPNVEYQVLGGQTNNKIIFGQRNGIYTFHLSVVDPYYSYCNLNTIFSVYVHGALPVTKFQPLLTILLMVTTTLLTAWLAYAIPKQLRSEKGQRLLGFCYQILQLCLGVCFCTWLRGKLRQWLRPRRVKDQNRGKVRVAQKHPET.

An N-terminal signal peptide occupies residues 1–16 (MLVLMLAAAVATMVRA). Residues 17–723 (HTLCRVHTVR…ALPVTKFQPL (707 aa)) are Extracellular-facing. Cystine bridges form between C20–C366, C56–C143, C142–C149, C384–C493, C507–C701, C522–C569, and C621–C651. 5 N-linked (GlcNAc...) asparagine glycosylation sites follow: N227, N419, N469, N535, and N627. The chain crosses the membrane as a helical span at residues 724–745 (LTILLMVTTTLLTAWLAYAIPK). Over 746–805 (QLRSEKGQRLLGFCYQILQLCLGVCFCTWLRGKLRQWLRPRRVKDQNRGKVRVAQKHPET) the chain is Cytoplasmic.

This sequence belongs to the CATSPERD family. As to quaternary structure, component of the CatSper complex or CatSpermasome composed of the core pore-forming members CATSPER1, CATSPER2, CATSPER3 and CATSPER4 as well as auxiliary members CATSPERB, CATSPERG2, CATSPERD, CATSPERE, CATSPERZ, C2CD6/CATSPERT, SLCO6C1, TMEM249, TMEM262 and EFCAB9. HSPA1 may be an additional auxiliary complex member. The core complex members CATSPER1, CATSPER2, CATSPER3 and CATSPER4 form a heterotetrameric channel. The auxiliary CATSPERB, CATSPERG2, CATSPERD and CATSPERE subunits form a pavilion-like structure over the pore which stabilizes the complex through interactions with CATSPER4, CATSPER3, CATSPER1 and CATSPER2 respectively. SLCO6C1 interacts with CATSPERE and TMEM262/CATSPERH interacts with CATSPERB, further stabilizing the complex. C2CD6/CATSPERT interacts at least with CATSPERD and is required for targeting the CatSper complex in the flagellar membrane. Testis-specific.

It is found in the cell projection. Its subcellular location is the cilium. The protein localises to the flagellum membrane. Auxiliary component of the CatSper complex, a complex involved in sperm cell hyperactivation. Sperm cell hyperactivation is needed for sperm motility which is essential late in the preparation of sperm for fertilization. Required for CATSPER1 stability before intraflagellar transport and/or incorporation of the CatSper complex channel into the flagellar membrane. The chain is Cation channel sperm-associated auxiliary subunit delta from Mus musculus (Mouse).